Consider the following 240-residue polypeptide: UDP-2,3-diacylglucosamine hydrolase (240 aa).

Aspartate 8, histidine 10, aspartate 41, asparagine 79, and histidine 114 together coordinate Mn(2+). A substrate-binding site is contributed by 79 to 80 (NR). 5 residues coordinate substrate: aspartate 122, serine 160, asparagine 164, lysine 167, and histidine 195. Mn(2+) is bound by residues histidine 195 and histidine 197.

This sequence belongs to the LpxH family. The cofactor is Mn(2+).

The protein resides in the cell inner membrane. It carries out the reaction UDP-2-N,3-O-bis[(3R)-3-hydroxytetradecanoyl]-alpha-D-glucosamine + H2O = 2-N,3-O-bis[(3R)-3-hydroxytetradecanoyl]-alpha-D-glucosaminyl 1-phosphate + UMP + 2 H(+). It functions in the pathway glycolipid biosynthesis; lipid IV(A) biosynthesis; lipid IV(A) from (3R)-3-hydroxytetradecanoyl-[acyl-carrier-protein] and UDP-N-acetyl-alpha-D-glucosamine: step 4/6. In terms of biological role, hydrolyzes the pyrophosphate bond of UDP-2,3-diacylglucosamine to yield 2,3-diacylglucosamine 1-phosphate (lipid X) and UMP by catalyzing the attack of water at the alpha-P atom. Involved in the biosynthesis of lipid A, a phosphorylated glycolipid that anchors the lipopolysaccharide to the outer membrane of the cell. The chain is UDP-2,3-diacylglucosamine hydrolase from Salmonella dublin (strain CT_02021853).